The sequence spans 382 residues: Histidine biosynthesis bifunctional protein HisB (382 aa).

Residues 1–190 (MQKIVFIDRD…EIYEFLRLPA (190 aa)) form a histidinol-phosphatase region. The active-site Nucleophile is aspartate 8. Mg(2+)-binding residues include aspartate 8, aspartate 10, and aspartate 129. Aspartate 10 acts as the Proton donor in catalysis. The interval 191 to 382 (RTALVERNTK…DNLPSTKGVL (192 aa)) is imidazoleglycerol-phosphate dehydratase.

This sequence in the N-terminal section; belongs to the histidinol-phosphatase family. The protein in the C-terminal section; belongs to the imidazoleglycerol-phosphate dehydratase family. Requires Mg(2+) as cofactor.

It localises to the cytoplasm. The catalysed reaction is D-erythro-1-(imidazol-4-yl)glycerol 3-phosphate = 3-(imidazol-4-yl)-2-oxopropyl phosphate + H2O. It catalyses the reaction L-histidinol phosphate + H2O = L-histidinol + phosphate. It participates in amino-acid biosynthesis; L-histidine biosynthesis; L-histidine from 5-phospho-alpha-D-ribose 1-diphosphate: step 6/9. Its pathway is amino-acid biosynthesis; L-histidine biosynthesis; L-histidine from 5-phospho-alpha-D-ribose 1-diphosphate: step 8/9. This chain is Histidine biosynthesis bifunctional protein HisB, found in Spirosoma linguale (strain ATCC 33905 / DSM 74 / LMG 10896 / Claus 1).